A 277-amino-acid chain; its full sequence is Large ribosomal subunit protein uL2 (277 aa).

The tract at residues 226–277 is disordered; sequence NPIDHPHGGGEGRTSGGRHPVTPWGKPTKGKKTRSNKSTNKFILISRHKRKK.

Belongs to the universal ribosomal protein uL2 family. Part of the 50S ribosomal subunit. Forms a bridge to the 30S subunit in the 70S ribosome.

Its function is as follows. One of the primary rRNA binding proteins. Required for association of the 30S and 50S subunits to form the 70S ribosome, for tRNA binding and peptide bond formation. It has been suggested to have peptidyltransferase activity; this is somewhat controversial. Makes several contacts with the 16S rRNA in the 70S ribosome. In Rhodopseudomonas palustris (strain BisA53), this protein is Large ribosomal subunit protein uL2.